The primary structure comprises 346 residues: RNA polymerase II holoenzyme cyclin-like subunit (346 aa).

In terms of domain architecture, Cyclin N-terminal spans 59–158 (NLLIKLGRRL…EMDSYLFLHH (100 aa)).

Belongs to the cyclin family. Cyclin C subfamily. In terms of assembly, component of the SRB8-11 complex, a regulatory module of the Mediator complex.

It localises to the nucleus. Component of the SRB8-11 complex. The SRB8-11 complex is a regulatory module of the Mediator complex which is itself involved in regulation of basal and activated RNA polymerase II-dependent transcription. The SRB8-11 complex may be involved in the transcriptional repression of a subset of genes regulated by Mediator. It may inhibit the association of the Mediator complex with RNA polymerase II to form the holoenzyme complex. The SRB8-11 complex phosphorylates the C-terminal domain (CTD) of the largest subunit of RNA polymerase II. This is RNA polymerase II holoenzyme cyclin-like subunit (SSN8) from Scheffersomyces stipitis (strain ATCC 58785 / CBS 6054 / NBRC 10063 / NRRL Y-11545) (Yeast).